Consider the following 170-residue polypeptide: Endoribonuclease YbeY (170 aa).

Residues His-118, His-122, and His-128 each coordinate Zn(2+).

It belongs to the endoribonuclease YbeY family. Requires Zn(2+) as cofactor.

The protein resides in the cytoplasm. Its function is as follows. Single strand-specific metallo-endoribonuclease involved in late-stage 70S ribosome quality control and in maturation of the 3' terminus of the 16S rRNA. In Mycobacteroides abscessus (strain ATCC 19977 / DSM 44196 / CCUG 20993 / CIP 104536 / JCM 13569 / NCTC 13031 / TMC 1543 / L948) (Mycobacterium abscessus), this protein is Endoribonuclease YbeY.